The chain runs to 265 residues: Probable trehalose-phosphate phosphatase (265 aa).

Asp35 functions as the Nucleophile in the catalytic mechanism. Asp35, Asp37, and Asp213 together coordinate Mg(2+). 35–37 (DID) contributes to the substrate binding site.

It belongs to the trehalose phosphatase family. Mg(2+) is required as a cofactor.

It catalyses the reaction alpha,alpha-trehalose 6-phosphate + H2O = alpha,alpha-trehalose + phosphate. Its pathway is glycan biosynthesis; trehalose biosynthesis. Its function is as follows. Removes the phosphate from trehalose 6-phosphate to produce free trehalose. This is Probable trehalose-phosphate phosphatase (otsB) from Sinorhizobium fredii (strain NBRC 101917 / NGR234).